Consider the following 432-residue polypeptide: Adenylosuccinate synthetase (432 aa).

GTP is bound by residues 13–19 and 41–43; these read GDEGKGK and GHT. D14 functions as the Proton acceptor in the catalytic mechanism. Positions 14 and 41 each coordinate Mg(2+). Residues 14–17, 39–42, T130, R144, Q225, T240, and R304 each bind IMP; these read DEGK and NAGH. The active-site Proton donor is H42. 300–306 is a substrate binding site; that stretch reads AVTGRPR. GTP contacts are provided by residues R306, 332–334, and 415–417; these read KLD and STG.

This sequence belongs to the adenylosuccinate synthetase family. In terms of assembly, homodimer. It depends on Mg(2+) as a cofactor.

The protein resides in the cytoplasm. The enzyme catalyses IMP + L-aspartate + GTP = N(6)-(1,2-dicarboxyethyl)-AMP + GDP + phosphate + 2 H(+). Its pathway is purine metabolism; AMP biosynthesis via de novo pathway; AMP from IMP: step 1/2. In terms of biological role, plays an important role in the de novo pathway of purine nucleotide biosynthesis. Catalyzes the first committed step in the biosynthesis of AMP from IMP. The protein is Adenylosuccinate synthetase of Actinobacillus pleuropneumoniae serotype 5b (strain L20).